The following is an 875-amino-acid chain: Valine--tRNA ligase (875 aa).

Residues 44 to 54 (PNVTGKLHLGH) carry the 'HIGH' region motif. The 'KMSKS' region signature appears at 520 to 524 (KMSKS). K523 contributes to the ATP binding site. The stretch at 804–875 (LEGLINIEEE…VRARLAQLKQ (72 aa)) forms a coiled coil.

Belongs to the class-I aminoacyl-tRNA synthetase family. ValS type 1 subfamily. As to quaternary structure, monomer.

The protein resides in the cytoplasm. The catalysed reaction is tRNA(Val) + L-valine + ATP = L-valyl-tRNA(Val) + AMP + diphosphate. Its function is as follows. Catalyzes the attachment of valine to tRNA(Val). As ValRS can inadvertently accommodate and process structurally similar amino acids such as threonine, to avoid such errors, it has a 'posttransfer' editing activity that hydrolyzes mischarged Thr-tRNA(Val) in a tRNA-dependent manner. The polypeptide is Valine--tRNA ligase (Anoxybacillus flavithermus (strain DSM 21510 / WK1)).